Reading from the N-terminus, the 261-residue chain is Putative hydro-lyase Nther_1142 (261 aa).

The protein belongs to the D-glutamate cyclase family.

This is Putative hydro-lyase Nther_1142 from Natranaerobius thermophilus (strain ATCC BAA-1301 / DSM 18059 / JW/NM-WN-LF).